The following is a 501-amino-acid chain: Lysine--tRNA ligase (501 aa).

Residues Glu411 and Glu418 each coordinate Mg(2+).

It belongs to the class-II aminoacyl-tRNA synthetase family. Homodimer. The cofactor is Mg(2+).

It is found in the cytoplasm. The catalysed reaction is tRNA(Lys) + L-lysine + ATP = L-lysyl-tRNA(Lys) + AMP + diphosphate. This is Lysine--tRNA ligase from Pseudomonas aeruginosa (strain UCBPP-PA14).